Consider the following 295-residue polypeptide: MVVPESFQLDQEILLDAGAQLHRLKMYPYFDVAHYLLMIIEVRDDLGSAASIFSRKHPLSCWLSSMLMCFADAFLANFLLGEPVIAPFKRHDDIILATIIWYLVFYAPFDGIYKIAKITPVKCVLAVMKEVKRAYKVSHGVSHAAKLYPNSYIVQVLVGTAKGAGSGIVRTLEQLVRGVWLPTHNELLRPSFATKACVVAASVLALEKSGTYLTAPHDLVYLVIVGFFVYFKLSAVILHVTDPFAPIENLFCAIFMGGIWDAVSRALAASRDRRAAGAHSNENGSSISTPEKKDQ.

Over 1 to 27 the chain is Lumenal; the sequence is MVVPESFQLDQEILLDAGAQLHRLKMY. Residues 28 to 45 form a helical membrane-spanning segment; the sequence is PYFDVAHYLLMIIEVRDD. Over 46-56 the chain is Cytoplasmic; that stretch reads LGSAASIFSRK. A discontinuously helical membrane pass occupies residues 57–80; it reads HPLSCWLSSMLMCFADAFLANFLL. At 81 to 89 the chain is on the lumenal side; that stretch reads GEPVIAPFK. A helical membrane pass occupies residues 90 to 107; sequence RHDDIILATIIWYLVFYA. Residues 108–119 lie on the Cytoplasmic side of the membrane; it reads PFDGIYKIAKIT. Residues 120 to 148 form a helical membrane-spanning segment; that stretch reads PVKCVLAVMKEVKRAYKVSHGVSHAAKLY. K129 and R133 together coordinate a 1,2-diacyl-sn-glycero-3-phospho-(1D-myo-inositol-4,5-bisphosphate). At 149-150 the chain is on the lumenal side; it reads PN. A discontinuously helical membrane pass occupies residues 151-177; it reads SYIVQVLVGTAKGAGSGIVRTLEQLVR. S166 contacts a 1,2-diacyl-sn-glycero-3-phospho-(1D-myo-inositol-4,5-bisphosphate). The Cytoplasmic segment spans residues 178 to 188; it reads GVWLPTHNELL. The helical transmembrane segment at 189 to 210 threads the bilayer; it reads RPSFATKACVVAASVLALEKSG. Residues 211–215 are Lumenal-facing; it reads TYLTA. The chain crosses the membrane as a helical span at residues 216 to 239; the sequence is PHDLVYLVIVGFFVYFKLSAVILH. Residues 240–295 are Cytoplasmic-facing; that stretch reads VTDPFAPIENLFCAIFMGGIWDAVSRALAASRDRRAAGAHSNENGSSISTPEKKDQ. Positions 274 to 295 are disordered; that stretch reads RAAGAHSNENGSSISTPEKKDQ.

It belongs to the TMEM38 family. As to quaternary structure, homotrimer; trimerization probably requires binding to phosphatidylinositol 4,5-bisphosphate (PIP2).

Its subcellular location is the endoplasmic reticulum membrane. In terms of biological role, potassium channel that mediates transmembrane potassium transport. Might be required for maintenance of rapid intracellular calcium release. May act as a counter-ion channel that functions in synchronization with calcium release from intracellular stores. Binds phosphatidylinositol 4,5-bisphosphate (PIP2). This chain is Trimeric intracellular cation channel type 1B.1, found in Caenorhabditis elegans.